The primary structure comprises 741 residues: Transketolase-1, chloroplastic (741 aa).

The N-terminal 66 residues, 1–66, are a transit peptide targeting the chloroplast; that stretch reads MASTSSLALS…NRSLRPLVRA (66 aa). A disordered region spans residues 22 to 51; it reads GSDQRGSLPAFSGLKSTGSRASASSRRRIA. Ala67 is subject to N-acetylalanine. His103 is a substrate binding site. Thiamine diphosphate is bound by residues His143 and 192–194; that span reads GPL. Asp233 lines the Mg(2+) pocket. The thiamine diphosphate site is built by Gly234 and Asn263. Residues Asn263 and Ile265 each contribute to the Mg(2+) site. His340 is a binding site for substrate. His340 serves as a coordination point for thiamine diphosphate. Position 428 is a phosphoserine (Ser428). Substrate-binding residues include Arg434 and Ser461. Residues Glu488 and Phe515 each coordinate thiamine diphosphate. Residue Glu488 is the Proton donor of the active site. Positions 539, 547, and 598 each coordinate substrate.

Belongs to the transketolase family. Homodimer. It depends on Mg(2+) as a cofactor. The cofactor is Ca(2+). Mn(2+) serves as cofactor. Requires Co(2+) as cofactor. Thiamine diphosphate is required as a cofactor.

It localises to the plastid. Its subcellular location is the chloroplast stroma. It catalyses the reaction D-sedoheptulose 7-phosphate + D-glyceraldehyde 3-phosphate = aldehydo-D-ribose 5-phosphate + D-xylulose 5-phosphate. It functions in the pathway carbohydrate biosynthesis; Calvin cycle. Functionally, catalyzes the reversible transfer of a two-carbon ketol group from fructose-6-phosphate or sedoheptulose-7-phosphate to glyceraldehyde-3-phosphate to yield xylulose-5-phosphate and erythrose-4-phosphate or ribose-5-phosphate, respectively. Could act as a stress sensor involved in adaptation process. This Arabidopsis thaliana (Mouse-ear cress) protein is Transketolase-1, chloroplastic (TKL-1).